A 204-amino-acid polypeptide reads, in one-letter code: Recombination protein RecR (204 aa).

A C4-type zinc finger spans residues 58-75 (CTICQNITDVGTDPCAIC). In terms of domain architecture, Toprim spans 83–181 (TVICVVESPV…AVTKIARGIP (99 aa)).

This sequence belongs to the RecR family.

May play a role in DNA repair. It seems to be involved in an RecBC-independent recombinational process of DNA repair. It may act with RecF and RecO. The polypeptide is Recombination protein RecR (Chlorobium chlorochromatii (strain CaD3)).